A 1289-amino-acid chain; its full sequence is uncharacterized protein (1289 aa).

An MHD1 domain is found at 615–733; the sequence is LDMYDVLKEL…DGMLSYSAQL (119 aa). A disordered region spans residues 745–774; that stretch reads DEPSYSLESSDTRSSLSLNNANVNHEKSRS. Low complexity predominate over residues 748–762; it reads SYSLESSDTRSSLSL. The C2 domain maps to 834–966; that stretch reads AQYHSSHNLE…DDGFPIDFSL (133 aa). One can recognise an MHD2 domain in the interval 1044–1184; sequence YDAILPLFDY…KSVSELKDEV (141 aa).

The protein localises to the cytoplasm. This is an uncharacterized protein from Saccharomyces cerevisiae (strain ATCC 204508 / S288c) (Baker's yeast).